A 263-amino-acid chain; its full sequence is Small ribosomal subunit protein uS15m (263 aa).

The transit peptide at 1-70 directs the protein to the mitochondrion; that stretch reads MVLKSVFRST…VRQYARPSRK (70 aa). The segment covering 238 to 251 has biased composition (basic and acidic residues); sequence EREKQKAEEAERKK. The disordered stretch occupies residues 238-263; the sequence is EREKQKAEEAERKKSSSSTNPQETAA.

It belongs to the universal ribosomal protein uS15 family. Component of the mitochondrial ribosome small subunit (28S) which comprises a 12S rRNA and about 30 distinct proteins.

It is found in the mitochondrion. In Danio rerio (Zebrafish), this protein is Small ribosomal subunit protein uS15m (mrps15).